A 148-amino-acid chain; its full sequence is Cytochrome c-type biogenesis protein CcmE (148 aa).

The Cytoplasmic portion of the chain corresponds to 1–7 (MKARNKR). A helical; Signal-anchor for type II membrane protein membrane pass occupies residues 8–28 (LMLVGGGIALLVAAAALVLSA). Residues 29–148 (FQQNLVFFHT…AHKTATTVQQ (120 aa)) are Periplasmic-facing. Residues His-123 and Tyr-127 each coordinate heme.

The protein belongs to the CcmE/CycJ family.

It localises to the cell inner membrane. Heme chaperone required for the biogenesis of c-type cytochromes. Transiently binds heme delivered by CcmC and transfers the heme to apo-cytochromes in a process facilitated by CcmF and CcmH. This is Cytochrome c-type biogenesis protein CcmE from Azoarcus sp. (strain BH72).